Here is a 74-residue protein sequence, read N- to C-terminus: Homeobox protein Hox-B8 (74 aa).

A compositionally biased stretch (low complexity) spans 1–24 (YTDCKLAASGLGEEAESSEQSPSP). A disordered region spans residues 1–28 (YTDCKLAASGLGEEAESSEQSPSPTQLF). The short motif at 27–32 (LFPWMR) is the Antp-type hexapeptide element. The segment at residues 39–74 (RRRGRQTYSRYQTLELEKEFLFNPYLTRKRRIEVSR) is a DNA-binding region (homeobox).

Belongs to the Antp homeobox family.

The protein resides in the nucleus. Functionally, sequence-specific transcription factor which is part of a developmental regulatory system that provides cells with specific positional identities on the anterior-posterior axis. The sequence is that of Homeobox protein Hox-B8 (HOXB8) from Gallus gallus (Chicken).